The primary structure comprises 118 residues: Holo-[acyl-carrier-protein] synthase (118 aa).

Positions 8 and 57 each coordinate Mg(2+).

The protein belongs to the P-Pant transferase superfamily. AcpS family. It depends on Mg(2+) as a cofactor.

It localises to the cytoplasm. The catalysed reaction is apo-[ACP] + CoA = holo-[ACP] + adenosine 3',5'-bisphosphate + H(+). In terms of biological role, transfers the 4'-phosphopantetheine moiety from coenzyme A to a Ser of acyl-carrier-protein. This chain is Holo-[acyl-carrier-protein] synthase, found in Pediococcus pentosaceus (strain ATCC 25745 / CCUG 21536 / LMG 10740 / 183-1w).